A 794-amino-acid chain; its full sequence is uncharacterized protein (794 aa).

An N-terminal signal peptide occupies residues 1 to 22 (MKLKYGTIIFSGLLGVSAILAA). Residue C23 is the site of N-palmitoyl cysteine attachment. C23 carries S-diacylglycerol cysteine lipidation. The segment covering 177 to 196 (SSGKTQVSQTSSGSNQQKTL) has biased composition (polar residues). 3 disordered regions span residues 177–208 (SSGKTQVSQTSSGSNQQKTLQKPLKIDTSDSS), 220–257 (AKNNGKKANNSKSNRRSTDQSTQTHNDQGDASESDKKI), and 466–506 (KSTD…ENNS). The segment covering 220-231 (AKNNGKKANNSK) has biased composition (low complexity). Residues 238-250 (DQSTQTHNDQGDA) show a composition bias toward polar residues.

It belongs to the MG185/MG260 family.

Its subcellular location is the cell membrane. This is an uncharacterized protein from Mycoplasma pneumoniae (strain ATCC 29342 / M129 / Subtype 1) (Mycoplasmoides pneumoniae).